Consider the following 193-residue polypeptide: MTKVKICGLSTQEAVTAAVSSGADYIGFVFAKSKRQVSLEQAQKLAKMIPEKVKKVGVFVSPTLEELKIAIKTVPLDLVQVHGDYDEDLQTDFSVPLIRAVQIKKGKENLTSKADYLLFDAPIAGSGETFDWQQLETEQLQKPFFIAGGLTSDNVKECIEHFAPYAVDVSSGVETNGRKDIEKIKRFIESVKK.

It belongs to the TrpF family.

It carries out the reaction N-(5-phospho-beta-D-ribosyl)anthranilate = 1-(2-carboxyphenylamino)-1-deoxy-D-ribulose 5-phosphate. The protein operates within amino-acid biosynthesis; L-tryptophan biosynthesis; L-tryptophan from chorismate: step 3/5. This is N-(5'-phosphoribosyl)anthranilate isomerase from Streptococcus mutans serotype c (strain ATCC 700610 / UA159).